A 239-amino-acid polypeptide reads, in one-letter code: tRNA1(Val) (adenine(37)-N6)-methyltransferase (239 aa).

This sequence belongs to the methyltransferase superfamily. tRNA (adenine-N(6)-)-methyltransferase family.

Its subcellular location is the cytoplasm. It carries out the reaction adenosine(37) in tRNA1(Val) + S-adenosyl-L-methionine = N(6)-methyladenosine(37) in tRNA1(Val) + S-adenosyl-L-homocysteine + H(+). Specifically methylates the adenine in position 37 of tRNA(1)(Val) (anticodon cmo5UAC). This is tRNA1(Val) (adenine(37)-N6)-methyltransferase from Vibrio parahaemolyticus serotype O3:K6 (strain RIMD 2210633).